The primary structure comprises 241 residues: GLIPR1-like protein 1 (241 aa).

Positions 1 to 22 (MILRKKLSYLWTLGLCLVASKS) are cleaved as a signal peptide. Residues 39-172 (LRLHNEARTN…PDSALLVCNY (134 aa)) enclose the SCP domain. Residue Ser220 is the site of GPI-anchor amidated serine attachment. The propeptide at 221–241 (GTRQLIACNPLYLISVLLTIF) is removed in mature form.

The protein belongs to the CRISP family. In terms of assembly, part of a oolemmal binding multimeric complex (IZUMO1 complex) composed at least of IZUMO1 and GLIPR1L1; the complex assemblage is influenced by the maturation status of the male germ cell. Interacts with IZUMO1. Post-translationally, N-glycosylated. N-glycosylation decreases during the transit in the caput. In terms of tissue distribution, highly expressed in testis, where it localizes to round and elongating spermatids and differentiated spermatozoa in the seminiferous tubules and epididymis (at protein level).

Its subcellular location is the cytoplasmic vesicle. The protein resides in the secretory vesicle. The protein localises to the acrosome. It localises to the cell membrane. It is found in the membrane raft. Required for optimal fertilization at the stage of sperm-oocyte fusion, plays a role in optimizing acrosome function, the translocation of IZUMO1 during the acrosome reaction and the fertilization process. Component of epididymosomes, one type of membranous microvesicules which mediate the transfer of lipids and proteins to spermatozoa plasma membrane during epididymal maturation. Also a component of the CD9-positive microvesicules found in the cauda region. This Bos taurus (Bovine) protein is GLIPR1-like protein 1.